The primary structure comprises 167 residues: Modulator of smoothened protein (167 aa).

4 helical membrane passes run 7–29, 68–88, 101–121, and 139–159; these read ISGCLFLAADIFAIASIANPDWI, TLFFIILGIVSLTITCGLLVI, WIAFMGMVLFCMAALIFPVGF, and VGSSYVLFVLSIFFTIVGLLF.

It localises to the cell projection. The protein resides in the cilium membrane. The protein localises to the cell membrane. Acts as a negative regulator of hedgehog signaling probably by promoting internalization and subsequent degradation of smoothened protein (SMO) present in the ciliary membrane. Plays a role in sonic hedgehog (SHH)-induced spinal neural progenitor cells differentiation. In Danio rerio (Zebrafish), this protein is Modulator of smoothened protein.